We begin with the raw amino-acid sequence, 96 residues long: Small ribosomal subunit protein bS6c (96 aa).

It belongs to the bacterial ribosomal protein bS6 family.

The protein localises to the plastid. The protein resides in the chloroplast. Functionally, binds together with bS18 to 16S ribosomal RNA. This Trieres chinensis (Marine centric diatom) protein is Small ribosomal subunit protein bS6c (rps6).